Consider the following 89-residue polypeptide: MSLTLVLFLIGILGFVFNRKNIILMLISIEIMLLSITFLILVSSINLDDIIGQTYAIYIIVVAGAESAIGLAILVAFYRLRGSIAIEYK.

The next 3 helical transmembrane spans lie at 1-21 (MSLT…NRKN), 22-42 (IILM…LILV), and 57-77 (IYII…LVAF).

Belongs to the complex I subunit 4L family.

The protein resides in the mitochondrion membrane. The enzyme catalyses a ubiquinone + NADH + 5 H(+)(in) = a ubiquinol + NAD(+) + 4 H(+)(out). Functionally, core subunit of the mitochondrial membrane respiratory chain NADH dehydrogenase (Complex I) that is believed to belong to the minimal assembly required for catalysis. Complex I functions in the transfer of electrons from NADH to the respiratory chain. The immediate electron acceptor for the enzyme is believed to be ubiquinone. The chain is NADH-ubiquinone oxidoreductase chain 4L (ND4L) from Hypocrea jecorina (Trichoderma reesei).